An 86-amino-acid polypeptide reads, in one-letter code: Toxin CngtIV (86 aa).

Residues 1 to 19 form the signal peptide; it reads MNSLLIITACLVLIGTVWA. The region spanning 20–84 is the LCN-type CS-alpha/beta domain; it reads KDGYLVDVKG…TWPLPNKRCG (65 aa). Cystine bridges form between C30–C83, C34–C59, C43–C64, and C47–C66.

The protein belongs to the long (4 C-C) scorpion toxin superfamily. Sodium channel inhibitor family. Beta subfamily. Expressed by the venom gland.

It is found in the secreted. Beta toxins bind voltage-independently at site-4 of sodium channels (Nav) and shift the voltage of activation toward more negative potentials thereby affecting sodium channel activation and promoting spontaneous and repetitive firing. The sequence is that of Toxin CngtIV from Centruroides noxius (Mexican scorpion).